The primary structure comprises 198 residues: UPF0314 protein Atu8092 (198 aa).

3 helical membrane passes run 14 to 34 (LRWFGVAAGLLLLQIVILYAM), 64 to 84 (WYTPSHIIHGFLFYWFAWLLF), and 150 to 170 (VPVWLTVVIAIFFEIFTGWLI).

This sequence belongs to the UPF0314 family.

The protein localises to the cell membrane. The sequence is that of UPF0314 protein Atu8092 from Agrobacterium fabrum (strain C58 / ATCC 33970) (Agrobacterium tumefaciens (strain C58)).